The primary structure comprises 579 residues: Laccase-4 (579 aa).

Positions 1 to 28 (MTMAISSALPSPLLLAASLLLLIVQAQG) are cleaved as a signal peptide. Plastocyanin-like domains lie at 36–152 (NVQM…PKLG) and 162–316 (KEVP…YENP). N-linked (GlcNAc...) asparagine glycans are attached at residues N41 and N82. Residues H86 and H88 each coordinate Cu cation. N-linked (GlcNAc...) asparagine glycosylation occurs at N118. Cu cation contacts are provided by H131 and H133. N-linked (GlcNAc...) asparagine glycans are attached at residues N191, N207, N243, N304, N340, N347, N386, N393, N403, N439, N446, and N462. A Plastocyanin-like 3 domain is found at 429 to 563 (DFPVAPLSPF…RMAWLVLDGS (135 aa)). Cu cation is bound by residues H480, H483, H485, H542, C543, H544, and H548.

Belongs to the multicopper oxidase family. Cu cation is required as a cofactor.

The protein resides in the secreted. It is found in the extracellular space. The protein localises to the apoplast. The enzyme catalyses 4 hydroquinone + O2 = 4 benzosemiquinone + 2 H2O. Functionally, lignin degradation and detoxification of lignin-derived products. The polypeptide is Laccase-4 (LAC4) (Oryza sativa subsp. japonica (Rice)).